The chain runs to 962 residues: Exportin-T (962 aa).

N-acetylmethionine is present on methionine 1. Residues 1–385 (MDEQALLGLN…MLAVMKKLTY (385 aa)) form a necessary for interaction with Ran, nuclear localization and nuclear import region. The necessary for tRNA-binding, cytoplasmic localization and nuclear export stretch occupies residues 443–962 (FMEVEVAIRL…LKVFFQRAKP (520 aa)). Lysine 634 carries the N6-acetyllysine modification.

Belongs to the exportin family. In terms of assembly, found in a complex with XPOT, Ran and tRNA. Probably found in a complex with nucleoporins. Interacts with Ran and tRNA in a GTP-dependent manner.

The protein localises to the nucleus. Its subcellular location is the cytoplasm. In terms of biological role, mediates the nuclear export of aminoacylated tRNAs. In the nucleus binds to tRNA and to the GTPase Ran in its active GTP-bound form. Docking of this trimeric complex to the nuclear pore complex (NPC) is mediated through binding to nucleoporins. Upon transit of a nuclear export complex into the cytoplasm, disassembling of the complex and hydrolysis of Ran-GTP to Ran-GDP (induced by RANBP1 and RANGAP1, respectively) cause release of the tRNA from the export receptor. XPOT then return to the nuclear compartment and mediate another round of transport. The directionality of nuclear export is thought to be conferred by an asymmetric distribution of the GTP- and GDP-bound forms of Ran between the cytoplasm and nucleus. This Homo sapiens (Human) protein is Exportin-T (XPOT).